Reading from the N-terminus, the 83-residue chain is Polcalcin Bra r 2 (83 aa).

EF-hand domains follow at residues 5–40 (TEKA…LGSV) and 43–75 (DDIK…NRGL). Ca(2+)-binding residues include Asp-18, Asn-20, Asp-22, Lys-24, Glu-29, Asp-53, Asp-55, Asp-57, Tyr-59, and Glu-64.

This chain is Polcalcin Bra r 2, found in Brassica campestris (Field mustard).